The following is a 90-amino-acid chain: uncharacterized protein (90 aa).

This is an uncharacterized protein from Homo sapiens (Human).